An 84-amino-acid polypeptide reads, in one-letter code: Delta-stichotoxin-Sgt3a (84 aa).

Residues 1–19 form the signal peptide; sequence MAYLKIVLVALMLVVAVSA. A propeptide spanning residues 20–33 is cleaved from the precursor; the sequence is MRLSDQEDQDISVA. 3 disulfide bridges follow: cysteine 38–cysteine 78, cysteine 40–cysteine 68, and cysteine 61–cysteine 79. A propeptide is located at residue glycine 84.

Belongs to the sea anemone sodium channel inhibitory toxin family. Type II subfamily.

The protein resides in the secreted. The protein localises to the nematocyst. In terms of biological role, binds specifically to voltage-gated sodium channels (Nav), thereby delaying their inactivation during signal transduction. The sequence is that of Delta-stichotoxin-Sgt3a from Stichodactyla gigantea (Giant carpet anemone).